A 109-amino-acid polypeptide reads, in one-letter code: Protein phosphatase 1 regulatory subunit 1C (109 aa).

The disordered stretch occupies residues 25–109; it reads AEQIRKRRPT…TNEREEQRDH (85 aa). Residues 45–54 are compositionally biased toward basic and acidic residues; the sequence is NPPEIDDKRG. The segment covering 55 to 75 has biased composition (polar residues); it reads PNTQGELQNASPKQRKQSVYT. Over residues 100-109 the composition is skewed to basic and acidic residues; the sequence is TNEREEQRDH.

Belongs to the protein phosphatase inhibitor 1 family.

The protein resides in the cytoplasm. Its function is as follows. May increase cell susceptibility to TNF-induced apoptosis. The sequence is that of Protein phosphatase 1 regulatory subunit 1C (PPP1R1C) from Homo sapiens (Human).